The sequence spans 748 residues: CCR4-NOT transcription complex subunit 10-A (748 aa).

The span at 1–17 shows a compositional bias: basic and acidic residues; sequence MAADKAGEQGAEKHEDS. Disordered regions lie at residues 1–25, 184–205, 483–524, and 605–635; these read MAAD…GISD, SNNK…EPFA, KQEN…PPSS, and VSLG…QMPQ. Low complexity predominate over residues 185-200; it reads NNKNGKNNETNSNANN. 2 stretches are compositionally biased toward polar residues: residues 487–509 and 605–615; these read GSKT…VCSN and VSLGVSSNEQE.

It belongs to the CNOT10 family. As to quaternary structure, component of the CCR4-NOT complex. cnot10 and cnot11 form a subcomplex docked to the cnot1 scaffold.

The protein localises to the cytoplasm. The protein resides in the nucleus. Its function is as follows. Component of the CCR4-NOT complex which is one of the major cellular mRNA deadenylases and is linked to various cellular processes including bulk mRNA degradation, miRNA-mediated repression, translational repression during translational initiation and general transcription regulation. Additional complex functions may be a consequence of its influence on mRNA expression. Is not required for association of CNOT7 to the CCR4-NOT complex. The polypeptide is CCR4-NOT transcription complex subunit 10-A (cnot10-a) (Xenopus laevis (African clawed frog)).